The chain runs to 239 residues: Uridylate kinase (239 aa).

13-16 is a binding site for ATP; the sequence is KVSG. Gly-55 provides a ligand contact to UMP. Positions 56 and 60 each coordinate ATP. UMP-binding positions include Asp-75 and 136 to 143; that span reads TGNPFFTT. The ATP site is built by Thr-163, Gln-164, Tyr-169, and Asp-172.

This sequence belongs to the UMP kinase family. Homohexamer.

The protein resides in the cytoplasm. The enzyme catalyses UMP + ATP = UDP + ADP. Its pathway is pyrimidine metabolism; CTP biosynthesis via de novo pathway; UDP from UMP (UMPK route): step 1/1. Inhibited by UTP. In terms of biological role, catalyzes the reversible phosphorylation of UMP to UDP. The sequence is that of Uridylate kinase from Bartonella quintana (strain Toulouse) (Rochalimaea quintana).